Reading from the N-terminus, the 200-residue chain is Recombination protein RecR (200 aa).

The C4-type zinc-finger motif lies at 58-75 (CSNCFCLKISQTSPCNFC). The Toprim domain occupies 82 to 177 (SSLCIVATPK…KISRLALGMP (96 aa)).

This sequence belongs to the RecR family.

Functionally, may play a role in DNA repair. It seems to be involved in an RecBC-independent recombinational process of DNA repair. It may act with RecF and RecO. In Chlamydia trachomatis serovar L2 (strain ATCC VR-902B / DSM 19102 / 434/Bu), this protein is Recombination protein RecR.